The following is a 126-amino-acid chain: Fluoride-specific ion channel FluC 1 (126 aa).

Helical transmembrane passes span 5–25, 39–59, 69–89, and 100–120; these read FILA…LVGI, TLFI…LFAI, IFLI…SLDS, and AAGA…IAGI. Residues glycine 77 and threonine 80 each contribute to the Na(+) site.

The protein belongs to the fluoride channel Fluc/FEX (TC 1.A.43) family.

It localises to the cell inner membrane. The enzyme catalyses fluoride(in) = fluoride(out). With respect to regulation, na(+) is not transported, but it plays an essential structural role and its presence is essential for fluoride channel function. Functionally, fluoride-specific ion channel. Important for reducing fluoride concentration in the cell, thus reducing its toxicity. This chain is Fluoride-specific ion channel FluC 1, found in Nitrobacter hamburgensis (strain DSM 10229 / NCIMB 13809 / X14).